Here is an 872-residue protein sequence, read N- to C-terminus: Alanine--tRNA ligase (872 aa).

Zn(2+)-binding residues include histidine 567, histidine 571, cysteine 669, and histidine 673.

The protein belongs to the class-II aminoacyl-tRNA synthetase family. It depends on Zn(2+) as a cofactor.

Its subcellular location is the cytoplasm. The catalysed reaction is tRNA(Ala) + L-alanine + ATP = L-alanyl-tRNA(Ala) + AMP + diphosphate. Its function is as follows. Catalyzes the attachment of alanine to tRNA(Ala) in a two-step reaction: alanine is first activated by ATP to form Ala-AMP and then transferred to the acceptor end of tRNA(Ala). Also edits incorrectly charged Ser-tRNA(Ala) and Gly-tRNA(Ala) via its editing domain. The sequence is that of Alanine--tRNA ligase from Streptococcus agalactiae serotype Ia (strain ATCC 27591 / A909 / CDC SS700).